Reading from the N-terminus, the 351-residue chain is MSARLRPELADLPAYAPGKTVPGAIKIASNETVHGPLPSVRAAIEKAIDGINRYPDNGYVELRERLAKHVNFAPEYISVGCGSVSLCQQLIQITSTVGDEVLFGWRSFEIYPLQVRTAGATPVQVPLTDHTFDLDAMLAAITDRTRLIFVCNPNNPTSTVVDPDALARFVEAVPPHIMVVVDEAYVEYIRDGLAPDSFGLVRAHSNVVVLRTFSKAYGLAGLRIGYAVADPDIIAALSKVYVPFTATSVSQAAAIACLDAADELLERTDAVVAERTRVSAALREAGYDLPPSQANFVWLPLVGRAQQFAADAANSRVIVRPYGEDGVRVTIAAPHENDAFLGFARGWDGLR.

K215 is modified (N6-(pyridoxal phosphate)lysine).

Belongs to the class-II pyridoxal-phosphate-dependent aminotransferase family. As to quaternary structure, homodimer. Requires pyridoxal 5'-phosphate as cofactor.

The catalysed reaction is an aromatic L-alpha-amino acid + 2-oxoglutarate = an aromatic oxo-acid + L-glutamate. Its function is as follows. Aminotransferase that catalyzes the conversion of aromatic amino acids and 2-oxoglutarate into corresponding aromatic oxo acids and L-glutamate. The protein is Aromatic amino acid aminotransferase of Mycolicibacterium vanbaalenii (strain DSM 7251 / JCM 13017 / BCRC 16820 / KCTC 9966 / NRRL B-24157 / PYR-1) (Mycobacterium vanbaalenii).